Reading from the N-terminus, the 968-residue chain is RNA polymerase-associated protein RapA (968 aa).

One can recognise a Helicase ATP-binding domain in the interval 163 to 332 (EVGQRFAPRV…FARLRLLDPD (170 aa)). An ATP-binding site is contributed by 176 to 183 (DEVGLGKT). The DEAH box signature appears at 278 to 281 (DEAH). Residues 491–678 (RVDWLIDFLK…GTKARYQELK (188 aa)) enclose the Helicase C-terminal domain.

This sequence belongs to the SNF2/RAD54 helicase family. RapA subfamily. Interacts with the RNAP. Has a higher affinity for the core RNAP than for the holoenzyme. Its ATPase activity is stimulated by binding to RNAP.

In terms of biological role, transcription regulator that activates transcription by stimulating RNA polymerase (RNAP) recycling in case of stress conditions such as supercoiled DNA or high salt concentrations. Probably acts by releasing the RNAP, when it is trapped or immobilized on tightly supercoiled DNA. Does not activate transcription on linear DNA. Probably not involved in DNA repair. The polypeptide is RNA polymerase-associated protein RapA (Shewanella pealeana (strain ATCC 700345 / ANG-SQ1)).